The following is a 482-amino-acid chain: Proline--tRNA ligase (482 aa).

Residues threonine 117, glutamate 119, and arginine 148 each contribute to the L-proline site. Residues arginine 148, glutamate 150, glutamine 232, and threonine 235 each coordinate ATP. Position 237 (histidine 237) interacts with L-proline. Serine 269 contacts ATP. The segment at 346–376 (EMRGVPLRVEIGPRDLEKGAAVISRRDTGEK) is interaction with tRNA. Zn(2+) contacts are provided by cysteine 436, cysteine 441, cysteine 464, and cysteine 467.

This sequence belongs to the class-II aminoacyl-tRNA synthetase family. ProS type 3 subfamily. As to quaternary structure, homodimer. The dimer is functionally asymmetric: only one of the two active sites at a time is able to form prolyl-adenylate, and only one tRNA molecule binds per dimer. Interacts with LeuRS, which enhances tRNA(Pro) aminoacylation.

It localises to the cytoplasm. It catalyses the reaction tRNA(Pro) + L-proline + ATP = L-prolyl-tRNA(Pro) + AMP + diphosphate. In terms of biological role, catalyzes the attachment of proline to tRNA(Pro) in a two-step reaction: proline is first activated by ATP to form Pro-AMP and then transferred to the acceptor end of tRNA(Pro). Can inadvertently accommodate and process cysteine. This chain is Proline--tRNA ligase (proS), found in Methanothermobacter thermautotrophicus (strain ATCC 29096 / DSM 1053 / JCM 10044 / NBRC 100330 / Delta H) (Methanobacterium thermoautotrophicum).